Here is a 207-residue protein sequence, read N- to C-terminus: Transcriptional regulatory protein RcsA (207 aa).

The HTH luxR-type domain occupies isoleucine 131–aspartate 196. The segment at residues threonine 155–glycine 174 is a DNA-binding region (H-T-H motif).

Belongs to the RcsA family. As to quaternary structure, interacts with RcsB.

Component of the Rcs signaling system, which controls transcription of numerous genes. Binds, with RcsB, to the RcsAB box to regulate expression of genes. The polypeptide is Transcriptional regulatory protein RcsA (Salmonella typhi).